The primary structure comprises 146 residues: Large-conductance mechanosensitive channel (146 aa).

3 helical membrane-spanning segments follow: residues 21 to 41, 44 to 64, and 83 to 103; these read VGII…ADLI, VIGL…LGDG, and GAFI…FLLV.

This sequence belongs to the MscL family. Homopentamer.

The protein localises to the cell inner membrane. In terms of biological role, channel that opens in response to stretch forces in the membrane lipid bilayer. May participate in the regulation of osmotic pressure changes within the cell. The protein is Large-conductance mechanosensitive channel of Cereibacter sphaeroides (strain ATCC 17025 / ATH 2.4.3) (Rhodobacter sphaeroides).